A 528-amino-acid polypeptide reads, in one-letter code: Dihydromonacolin L monooxygenase LovA (528 aa).

Residues 1–23 (MTVDALTQPHHLLSLAWNDTQQH) are Cytoplasmic-facing. The chain crosses the membrane as a helical; Signal-anchor for type II membrane protein span at residues 24–44 (GSWFAPLVTTSAGLLCLLLYL). Residues 45–528 (CSSGRRSDLP…DEDIRLPGSL (484 aa)) lie on the Lumenal side of the membrane. Heme is bound at residue C465.

Belongs to the cytochrome P450 family. It depends on heme as a cofactor.

It localises to the membrane. Its subcellular location is the endoplasmic reticulum membrane. It carries out the reaction dihydromonacolin L carboxylate + reduced [NADPH--hemoprotein reductase] + O2 = monacolin L carboxylate + oxidized [NADPH--hemoprotein reductase] + 2 H2O + H(+). It catalyses the reaction monacolin L carboxylate + reduced [NADPH--hemoprotein reductase] + O2 = monacolin J carboxylate + oxidized [NADPH--hemoprotein reductase] + H2O + H(+). Its pathway is polyketide biosynthesis; lovastatin biosynthesis. Dihydromonacolin L monooxygenase; part of the gene cluster that mediates the biosynthesis of lovastatin (also known as mevinolin, mevacor or monacolin K), a hypolipidemic inhibitor of (3S)-hydroxymethylglutaryl-coenzyme A (HMG-CoA) reductase (HMGR). The first step in the biosynthesis of lovastatin is the production of dihydromonacolin L acid by the lovastatin nonaketide synthase lovB and the trans-acting enoyl reductase lovC via condensation of one acetyl-CoA unit and 8 malonyl-CoA units. Dihydromonacolin L acid is released from lovB by the thioesterase lovG. Next, dihydromonacolin L acid is oxidized by the dihydromonacolin L monooxygenase lovA twice to form monacolin J acid. The 2-methylbutyrate moiety of lovastatin is synthesized by the lovastatin diketide synthase lovF via condensation of one acetyl-CoA unit and one malonyl-CoA unit. Finally, the covalent attachment of this moiety to monacolin J acid is catalyzed by the transesterase lovD to yield lovastatin. LovD has broad substrate specificity and can also convert monacolin J to simvastatin using alpha-dimethylbutanoyl-S-methyl-3-mercaptopropionate (DMB-S-MMP) as the thioester acyl donor, and can also catalyze the reverse reaction and function as hydrolase in vitro. LovD has much higher activity with LovF-bound 2-methylbutanoate than with free diketide substrates. The protein is Dihydromonacolin L monooxygenase LovA of Aspergillus terreus.